The sequence spans 164 residues: Small ribosomal subunit protein uS5 (164 aa).

The S5 DRBM domain occupies 10-73; it reads IEERVVAINR…ESAKKNMIEV (64 aa).

This sequence belongs to the universal ribosomal protein uS5 family. Part of the 30S ribosomal subunit. Contacts proteins S4 and S8.

Functionally, with S4 and S12 plays an important role in translational accuracy. In terms of biological role, located at the back of the 30S subunit body where it stabilizes the conformation of the head with respect to the body. The protein is Small ribosomal subunit protein uS5 of Streptococcus suis (strain 98HAH33).